A 192-amino-acid chain; its full sequence is Mitochondrial import inner membrane translocase subunit Tim22 (192 aa).

Intrachain disulfides connect Cys-67–Cys-139 and Cys-158–Cys-177. Helical transmembrane passes span 72-92, 123-141, and 168-188; these read VLACVGGFVLGGAFGVFTAGI, YAKNFAIVGAMFSCTECLV, and AGVKAGAIGCGGFAAFSAAID.

Belongs to the Tim17/Tim22/Tim23 family. Component of the TIM22 complex, whose core is composed of TIMM22, associated with peripheral protein FXC1/TIMM10B and the 70 kDa heterohexamer. In most cases, the 70 kDa complex is composed of TIMM9 and TIMM10 (TIMM10A or TIMM10B). A small fraction of the 70 kDa complex is composed of TIMM8 (TIMM8A/DDP1 or TIMM8B/DDP2) and TIMM13. The TIM22 complex also contains AGK and TIMM29. Interacts directly with TIMM9, TIMM10A and FXC1/TIMM10B. Interacts (when oxidized) with TIMM29; interaction is direct. Disulfide bonds promote efficient assembly of the TIM22 complex.

The protein resides in the mitochondrion inner membrane. Its function is as follows. Essential core component of the TIM22 complex, a complex that mediates the import and insertion of multi-pass transmembrane proteins into the mitochondrial inner membrane. In the TIM22 complex, it constitutes the voltage-activated and signal-gated channel. Forms a twin-pore translocase that uses the membrane potential as external driving force in 2 voltage-dependent steps. The protein is Mitochondrial import inner membrane translocase subunit Tim22 (Timm22) of Rattus norvegicus (Rat).